A 102-amino-acid polypeptide reads, in one-letter code: Large ribosomal subunit protein eL30 (102 aa).

It belongs to the eukaryotic ribosomal protein eL30 family. Part of the 50S ribosomal subunit.

The sequence is that of Large ribosomal subunit protein eL30 from Thermococcus kodakarensis (strain ATCC BAA-918 / JCM 12380 / KOD1) (Pyrococcus kodakaraensis (strain KOD1)).